Reading from the N-terminus, the 132-residue chain is MDVTRLLLATLLVFLCFFTAYSHPPPEEKLRDDRSLRSNSSVNLLDFPSVSIVALNKNSKQISRKEAEKKRSSKKEASMKKVARPRTPLSAPCVTTRDSCKPPAPACCDPCASCQCRFFRSACSCRVLSLNC.

The first 22 residues, 1-22, serve as a signal peptide directing secretion; sequence MDVTRLLLATLLVFLCFFTAYS. N-linked (GlcNAc...) asparagine glycosylation is present at asparagine 39. The disordered stretch occupies residues 61–87; that stretch reads QISRKEAEKKRSSKKEASMKKVARPRT. Basic and acidic residues predominate over residues 63–79; it reads SRKEAEKKRSSKKEASM. 5 disulfides stabilise this stretch: cysteine 93–cysteine 108, cysteine 100–cysteine 114, cysteine 107–cysteine 125, cysteine 111–cysteine 132, and cysteine 116–cysteine 123. An Agouti domain is found at 93–132; sequence CVTTRDSCKPPAPACCDPCASCQCRFFRSACSCRVLSLNC.

It localises to the secreted. Its function is as follows. Involved in the regulation of melanogenesis. The binding of ASP to MC1R precludes alpha-MSH initiated signaling and thus blocks production of cAMP, leading to a down-regulation of eumelanogenesis (brown/black pigment) and thus increasing synthesis of pheomelanin (yellow/red pigment). The chain is Agouti-signaling protein (ASIP) from Macaca silenus (Lion-tailed macaque).